A 416-amino-acid polypeptide reads, in one-letter code: UPF0761 membrane protein Mpe_A1422 (416 aa).

The next 6 helical transmembrane spans lie at Ile63–Gly83, Leu120–Asp140, Val159–Leu179, Leu198–Phe218, Gly234–Val256, and Ile271–Ala291.

This sequence belongs to the UPF0761 family.

Its subcellular location is the cell inner membrane. The sequence is that of UPF0761 membrane protein Mpe_A1422 from Methylibium petroleiphilum (strain ATCC BAA-1232 / LMG 22953 / PM1).